The sequence spans 475 residues: UDP-N-acetylmuramate--L-alanine ligase (475 aa).

118-124 (GTHGKTT) is a binding site for ATP.

Belongs to the MurCDEF family.

The protein localises to the cytoplasm. It catalyses the reaction UDP-N-acetyl-alpha-D-muramate + L-alanine + ATP = UDP-N-acetyl-alpha-D-muramoyl-L-alanine + ADP + phosphate + H(+). It participates in cell wall biogenesis; peptidoglycan biosynthesis. In terms of biological role, cell wall formation. This is UDP-N-acetylmuramate--L-alanine ligase from Paracoccus denitrificans (strain Pd 1222).